Reading from the N-terminus, the 94-residue chain is Co-chaperonin GroES (94 aa).

It belongs to the GroES chaperonin family. In terms of assembly, heptamer of 7 subunits arranged in a ring. Interacts with the chaperonin GroEL.

The protein resides in the cytoplasm. In terms of biological role, together with the chaperonin GroEL, plays an essential role in assisting protein folding. The GroEL-GroES system forms a nano-cage that allows encapsulation of the non-native substrate proteins and provides a physical environment optimized to promote and accelerate protein folding. GroES binds to the apical surface of the GroEL ring, thereby capping the opening of the GroEL channel. This is Co-chaperonin GroES from Bacillus subtilis (strain 168).